Here is a 230-residue protein sequence, read N- to C-terminus: 7-cyano-7-deazaguanine synthase (230 aa).

Position 8–18 (8–18 (LSGGMDSAVVT)) interacts with ATP. Zn(2+)-binding residues include cysteine 186, cysteine 196, cysteine 199, and cysteine 202.

This sequence belongs to the QueC family. The cofactor is Zn(2+).

The enzyme catalyses 7-carboxy-7-deazaguanine + NH4(+) + ATP = 7-cyano-7-deazaguanine + ADP + phosphate + H2O + H(+). It functions in the pathway purine metabolism; 7-cyano-7-deazaguanine biosynthesis. Functionally, catalyzes the ATP-dependent conversion of 7-carboxy-7-deazaguanine (CDG) to 7-cyano-7-deazaguanine (preQ(0)). This chain is 7-cyano-7-deazaguanine synthase, found in Xylella fastidiosa (strain M12).